The following is a 176-amino-acid chain: Ribosome maturation factor RimM (176 aa).

A PRC barrel domain is found at 93–172 (KDEFFQFDII…EILVKGARDI (80 aa)).

The protein belongs to the RimM family. Binds ribosomal protein uS19.

The protein localises to the cytoplasm. Its function is as follows. An accessory protein needed during the final step in the assembly of 30S ribosomal subunit, possibly for assembly of the head region. Essential for efficient processing of 16S rRNA. May be needed both before and after RbfA during the maturation of 16S rRNA. It has affinity for free ribosomal 30S subunits but not for 70S ribosomes. This Campylobacter concisus (strain 13826) protein is Ribosome maturation factor RimM.